Here is a 478-residue protein sequence, read N- to C-terminus: Zinc metalloproteinase/disintegrin (478 aa).

An N-terminal signal peptide occupies residues 1-20 (MIQVLLVTICLAVFPYQGSS). The propeptide occupies 21-194 (KTLKSGNVND…KASQLNLTPE (174 aa)). Glutamine 195 carries the post-translational modification Pyrrolidone carboxylic acid. In terms of domain architecture, Peptidase M12B spans 201–397 (RYIELVIVAD…RNPQCILNQP (197 aa)). Ca(2+) contacts are provided by glutamate 204 and aspartate 288. 3 disulfide bridges follow: cysteine 312-cysteine 392, cysteine 352-cysteine 376, and cysteine 354-cysteine 359. Histidine 337 lines the Zn(2+) pocket. Glutamate 338 is a catalytic residue. Residues histidine 341 and histidine 347 each coordinate Zn(2+). Ca(2+) is bound by residues cysteine 392 and asparagine 395. The propeptide occupies 398–413 (LRTDTVSTPVSGNELL). One can recognise a Disintegrin domain in the interval 405–478 (TPVSGNELLQ…SDCPRNPYKD (74 aa)). Intrachain disulfides connect cysteine 420–cysteine 443, cysteine 434–cysteine 440, cysteine 439–cysteine 464, and cysteine 452–cysteine 471. The short motif at 456 to 458 (VGD) is the Cell attachment site; atypical (VGD) element.

The protein belongs to the venom metalloproteinase (M12B) family. P-II subfamily. P-IIe sub-subfamily. As to quaternary structure, monomer (metalloproteinase). Heterodimer; disulfide-linked (disintegrin). It depends on Zn(2+) as a cofactor. As to expression, expressed by the venom gland.

The protein resides in the secreted. Fibrinolytic and caseinolytic activities are inhibited by Cd(2+), Cu(2+) and Co(2+) ions. Not inhibited by Mg(2+), Ca(2+) and Ba(2+). Also inhibited by EDTA, EGTA and 1,10-phenanthroline. Fibrinolytic and fibrinogenolytic metalloproteinase that hydrolyzes the Aalpha-chain and more slowly the Bbeta-chain of fibrin and fibrinogen. Its fibrinolytic activity is direct, without any plasminogen activation. Also hydrolyzes casein and B-chain of oxidized insulin. Inhibits ADP-induced and collagen-induced platelet aggregation. Shows low hemorrhagic activity. Cleaves the plasma proteinase inhibitors alpha(2)-macroglobulin (A2M) and pregnancy zone protein (PZP), and is inhibited by them. The metalloprotease has no strict P1-P1' specificity requirement. Hydrolysis at sites with a Pro residue at P1 is observed with bradykinin, substance P, PZP and alpha chain fibrinogen (FGA). Functionally, poor inhibitor of platelet aggregation. The disintegrin inhibits the adhesion of the alpha-4/beta-1 (ITGA4/ITGB1) integrin to VCAM-1. Inhibition on alpha-2b/beta-3 (ITGA2B/ITGB3) is low. The protein is Zinc metalloproteinase/disintegrin of Macrovipera lebetinus (Levantine viper).